The following is a 306-amino-acid chain: Nucleotide-binding protein amb4396 (306 aa).

A compositionally biased stretch (polar residues) spans 1 to 14 (MSDLHSSPTDQTSA). Residues 1 to 20 (MSDLHSSPTDQTSAPAHAGG) are disordered. 29-36 (GMSGAGKT) provides a ligand contact to ATP. A GTP-binding site is contributed by 77-80 (DIRT).

This sequence belongs to the RapZ-like family.

Displays ATPase and GTPase activities. In Paramagnetospirillum magneticum (strain ATCC 700264 / AMB-1) (Magnetospirillum magneticum), this protein is Nucleotide-binding protein amb4396.